The following is a 517-amino-acid chain: Light-independent protochlorophyllide reductase subunit B (517 aa).

Position 36 (Asp-36) interacts with [4Fe-4S] cluster. The Proton donor role is filled by Asp-285. Position 420-421 (420-421 (GL)) interacts with substrate.

The protein belongs to the ChlB/BchB/BchZ family. Protochlorophyllide reductase is composed of three subunits; BchL, BchN and BchB. Forms a heterotetramer of two BchB and two BchN subunits. The cofactor is [4Fe-4S] cluster.

The enzyme catalyses chlorophyllide a + oxidized 2[4Fe-4S]-[ferredoxin] + 2 ADP + 2 phosphate = protochlorophyllide a + reduced 2[4Fe-4S]-[ferredoxin] + 2 ATP + 2 H2O. It functions in the pathway porphyrin-containing compound metabolism; bacteriochlorophyll biosynthesis (light-independent). Functionally, component of the dark-operative protochlorophyllide reductase (DPOR) that uses Mg-ATP and reduced ferredoxin to reduce ring D of protochlorophyllide (Pchlide) to form chlorophyllide a (Chlide). This reaction is light-independent. The NB-protein (BchN-BchB) is the catalytic component of the complex. The chain is Light-independent protochlorophyllide reductase subunit B from Bradyrhizobium sp. (strain BTAi1 / ATCC BAA-1182).